A 1431-amino-acid chain; its full sequence is MELPKEMEEYFSMLQREIDKAYEIAKKARAQGKDPSLDVEIPQASDMAGRVESLVGPPGVAERIRELVKEYGKEIAALKIVDEIIDGKFGDLGSKEKYAEQAVRTALAILTEGVVSAPIEGIASVKIKRNTWSDNSEYLALYYAGPIRSSGGTAQALSVLVGDYVRRKLGLDRFKPSEKHIERMVEEVDLYHRTVSRLQYHPSPEEVRLAMRNIPIEITGEATDEVEVSHRDIPGVETNQLRGGAILVLAEGVLQKAKKLVKYIDKMGIEGWEWLKEFVEAKEKGEEIEEEGSAESTVEETKVEVDMGFYYSLYQKFKSEIAPNDKYAKEIIGGRPLFSDPSRNGGFRLRYGRSRVSGFATWGINPATMILVDEFLAIGTQLKTERPGKGAVVTPVTTIEGPIVKLKDGSVVKVDDYKLALKIRDEVEEILYLGDAVIAFGDFVENNQTLLPANYCEEWWILEFTKALNEIYEVELKPFEVNSSEDLEEAADYLEVDIEFLKELLKDPLRTKPPVELAIHFSEILGIPLHPYYTLYWNSVKPEQVEKLWRVLKEHAHIDWDNFRGIKFARRIVIPLEKLRDSKRALELLGLPHKVEGKNVIVDYPWAAALLTPLGNLEWEFRAKPLHTTIDIINENNEIKLRDRGISWIGARMGRPEKAKERKMKPPVQVLFPIGLAGGSSRDIKKAAEEGKVAEVEIALFKCPKCGHVGPEHICPNCGTRKELIWVCPRCNAEYPESQASGYNYTCPKCNVKLKPYAKRKIKPSELLKRAMDNVKVYGIDKLKGVMGMTSGWKMPEPLEKGLLRAKNDVYVFKDGTIRFDATDAPITHFRPREIGVSVEKLRELGYTHDFEGNPLVSEDQIVELKPQDIILSKEAGKYLLKVAKFVDDLLEKFYGLPRFYNAEKMEDLIGHLVIGLAPHTSAGIVGRIIGFVDALVGYAHPYFHAAKRRNCFPGDTRILVQINGTPQRVTLKELYELFDEEHYESMVYVRKKPKVDIKVYSFNPEEGKVVLTDIEEVIKAPATDHLIRFELELGSSFETTVDHPVLVYENGKFVEKRAFEVREGNIIIIIDESTLEPLKVAVKKIEFIEPPEDFVFSLNAKKYHTVIINENIVTHQCDGDEDAVMLLLDALLNFSRYYLPEKRGGKMDAPLVITTRLDPREVDSEVHNMDIVRYYPLEFYEATYELKSPKELVGVIERVEDRLGKPEMYYGLKFTHDTDDIALGPKMSLYKQLGDMEEKVKRQLDVARRIRAVDEHKVAETILNSHLIPDLRGNLRSFTRQEFRCVKCNTKFRRPPLDGKCPICGGKIVLTVSKGAIEKYLGTAKMLVTEYKVKNYTRQRICLTERDIDSLFETVFPETQLTLLVNPNDICQRIIMERTGGSKKSGLLENFANGYNKGKKEEMPKKQRKKEQEKSKKRKVISLDDFFSRK.

Residues Leu1388–Lys1431 are disordered. The segment covering Gly1399 to Lys1415 has biased composition (basic and acidic residues).

The protein belongs to the archaeal DNA polymerase II family. As to quaternary structure, heterodimer of a large subunit and a small subunit. This protein undergoes a protein self splicing that involves a post-translational excision of the intervening region (intein) followed by peptide ligation.

It catalyses the reaction DNA(n) + a 2'-deoxyribonucleoside 5'-triphosphate = DNA(n+1) + diphosphate. It carries out the reaction Exonucleolytic cleavage in the 3'- to 5'-direction to yield nucleoside 5'-phosphates.. Functionally, possesses two activities: a DNA synthesis (polymerase) and an exonucleolytic activity that degrades single-stranded DNA in the 3'- to 5'-direction. Has a template-primer preference which is characteristic of a replicative DNA polymerase. This is DNA polymerase II large subunit (polC) from Pyrococcus horikoshii (strain ATCC 700860 / DSM 12428 / JCM 9974 / NBRC 100139 / OT-3).